Consider the following 190-residue polypeptide: Putative manganese efflux pump MntP (190 aa).

5 helical membrane passes run 37 to 57 (LILA…GWGI), 64 to 84 (LSFI…GVGA), 111 to 131 (LILG…MAFV), 135 to 155 (IITL…VGAW), and 164 to 184 (FGGW…GNIL).

It belongs to the MntP (TC 9.B.29) family.

The protein resides in the cell membrane. Functionally, probably functions as a manganese efflux pump. This Corynebacterium efficiens (strain DSM 44549 / YS-314 / AJ 12310 / JCM 11189 / NBRC 100395) protein is Putative manganese efflux pump MntP.